A 1284-amino-acid chain; its full sequence is DNA-directed RNA polymerase subunit beta (1284 aa).

The protein belongs to the RNA polymerase beta chain family. As to quaternary structure, the RNAP catalytic core consists of 2 alpha, 1 beta, 1 beta' and 1 omega subunit. When a sigma factor is associated with the core the holoenzyme is formed, which can initiate transcription.

It carries out the reaction RNA(n) + a ribonucleoside 5'-triphosphate = RNA(n+1) + diphosphate. In terms of biological role, DNA-dependent RNA polymerase catalyzes the transcription of DNA into RNA using the four ribonucleoside triphosphates as substrates. This chain is DNA-directed RNA polymerase subunit beta, found in Mesoplasma florum (strain ATCC 33453 / NBRC 100688 / NCTC 11704 / L1) (Acholeplasma florum).